A 194-amino-acid chain; its full sequence is dCTP deaminase (194 aa).

DCTP is bound by residues 110–115 (RSSLAR), D128, 136–138 (VLE), Y171, K178, and Q182. E138 acts as the Proton donor/acceptor in catalysis.

It belongs to the dCTP deaminase family. Homotrimer.

The enzyme catalyses dCTP + H2O + H(+) = dUTP + NH4(+). The protein operates within pyrimidine metabolism; dUMP biosynthesis; dUMP from dCTP (dUTP route): step 1/2. Its function is as follows. Catalyzes the deamination of dCTP to dUTP. The protein is dCTP deaminase of Glaesserella parasuis serovar 5 (strain SH0165) (Haemophilus parasuis).